The sequence spans 257 residues: NH(3)-dependent NAD(+) synthetase (257 aa).

28–35 (GISGGVDS) contacts ATP. Residue D34 coordinates Mg(2+). A deamido-NAD(+)-binding site is contributed by R109. T129 serves as a coordination point for ATP. Residue E134 participates in Mg(2+) binding. Positions 142 and 149 each coordinate deamido-NAD(+). Residues K158 and S180 each coordinate ATP. 240–241 (HK) contributes to the deamido-NAD(+) binding site.

It belongs to the NAD synthetase family. In terms of assembly, homodimer.

The enzyme catalyses deamido-NAD(+) + NH4(+) + ATP = AMP + diphosphate + NAD(+) + H(+). The protein operates within cofactor biosynthesis; NAD(+) biosynthesis; NAD(+) from deamido-NAD(+) (ammonia route): step 1/1. In terms of biological role, catalyzes the ATP-dependent amidation of deamido-NAD to form NAD. Uses ammonia as a nitrogen source. This is NH(3)-dependent NAD(+) synthetase from Pyrococcus furiosus (strain ATCC 43587 / DSM 3638 / JCM 8422 / Vc1).